Consider the following 1053-residue polypeptide: MSSEESYRAILRYLTNEREPYAPGTEGNVKRKIRKAAACYVVRGGTLYYQRRQRHRKTFAELEVVLQPERRRDLIEAAHLGPGGTHHTRHQTWHYLSKTYWWRGILKQVKDYIKQCSKCQEKLDRSRPISDVSEMLEELGLDLESGEESNESEDDLSNFTSSPTTASKPAKKKPVSKHELVFVDTKGVVKRSSPKHCQAVLKQLNEQRLSNQFCDVTLLIEGEEYKAHKSVLSANSEYFRDLFIEKGAVSSHEAVVDLSGFCKASFLPLLEFAYTSVLSFDFCSMADVAILARHLFMSEVLEICESVHKLMEEKQLTVYKKGEVQTVASTQDLRVQNGGTAPPVASSEGTTTSLPTELGDCEIVLLVNGELPEAEQNGEVGRQPEPQVSSEAESALSSVGCIADSHPEMESVDLITKNNQTELETSNNRENNTVSNIHPKLSKENVISSSPEDSGMGNDISAEDICAEDIPKHRQKVDQPLKDQENLVASTAKTDFGPDDDTYRSRLRQRSVNEGAYIRLHKGMEKKLQKRKAVPKSAVQQVAQKLVQRGKKMKQPKRDAKENTEEASHKCGECGMVFQRRYALIMHKLKHERARDYKCPLCKKQFQYSASLRAHLIRHTRKDAPSSSSSNSTSNEASGTSSEKGRTKREFICSICGRTLPKLYSLRIHMLKHTGVKPHACQVCGKTFIYKHGLKLHQSLHQSQKQFQCELCVKSFVTKRSLQEHMSIHTGESKYLCSVCGKSFHRGSGLSKHFKKHQPKPEVRGYHCTQCEKSFFEARDLRQHMNKHLGVKPFQCQFCDKCYSWKKDWYSHVKSHSVTEPYRCNICGKEFYEKALFRRHVKKATHGKKGRAKQNLERVCEKCGRKFTQLREYRRHMNNHEGVKPFECLTCGVAWADARSLKRHVRTHTGERPYVCPVCSEAYIDARTLRKHMTKFHRDYVPCKIMLEKDTLQFHNQGTQVAHAVSILTAGMQEQESSGPQELETVVVTGETMEALEAVAATEEYPSVSTLSDQSIMQVVNYVLAQQQGQKLSEVAEAIQTVKVEVAHISGGE.

Over residues 141–156 the composition is skewed to acidic residues; that stretch reads LDLESGEESNESEDDL. The interval 141–173 is disordered; it reads LDLESGEESNESEDDLSNFTSSPTTASKPAKKK. Positions 157–168 are enriched in low complexity; it reads SNFTSSPTTASK. One can recognise a BTB domain in the interval 214-282; it reads CDVTLLIEGE…AYTSVLSFDF (69 aa). The tract at residues 546–566 is disordered; that stretch reads LVQRGKKMKQPKRDAKENTEE. The segment covering 556–566 has biased composition (basic and acidic residues); that stretch reads PKRDAKENTEE. 2 C2H2-type zinc fingers span residues 569 to 591 and 597 to 619; these read HKCG…KLKH and YKCP…LIRH. The segment at 619–643 is disordered; it reads HTRKDAPSSSSSNSTSNEASGTSSE. The span at 626-642 shows a compositional bias: low complexity; the sequence is SSSSSNSTSNEASGTSS. 10 C2H2-type zinc fingers span residues 651 to 673, 679 to 701, 707 to 729, 735 to 757, 766 to 788, 794 to 816, 822 to 846, 858 to 880, 886 to 908, and 914 to 937; these read FICS…MLKH, HACQ…QSLH, FQCE…MSIH, YLCS…FKKH, YHCT…MNKH, FQCQ…VKSH, YRCN…KATH, RVCE…MNNH, FECL…VRTH, and YVCP…TKFH. Lys-1043 participates in a covalent cross-link: Glycyl lysine isopeptide (Lys-Gly) (interchain with G-Cter in SUMO2). Ser-1050 carries the phosphoserine modification.

It is found in the nucleus. The protein localises to the nucleolus. Functionally, may be involved in transcriptional regulation. The protein is Zinc finger and BTB domain-containing protein 11 of Homo sapiens (Human).